Here is a 572-residue protein sequence, read N- to C-terminus: Flagellin A (572 aa).

This sequence belongs to the bacterial flagellin family. Heteromer of FlaA and FlaB. Interacts with FliW.

The protein localises to the secreted. It localises to the bacterial flagellum. In terms of biological role, flagellin is the subunit protein which polymerizes to form the filaments of bacterial flagella. FlaA binds to flagellar assembly factor FliW protein, preventing FliW from binding to CsrA, so that CsrA can then bind flaA mRNA and represses its translation. The protein is Flagellin A (flaA) of Campylobacter jejuni subsp. jejuni serotype O:2 (strain ATCC 700819 / NCTC 11168).